The following is a 533-amino-acid chain: Di/tripeptide-binding protein 3 (533 aa).

A signal peptide spans 1 to 24; that stretch reads MRKILPLRAWLAAGLILGSPFSHA.

This sequence belongs to the bacterial solute-binding protein 5 family. In terms of assembly, the complex is composed of two ATP-binding proteins (DppD and DppF), two transmembrane proteins (DppB and DppC) and a solute-binding protein (DppA3). Five orthologous SBPs (DppA1-A5) are present in P.aeruginosa, which increases the substrate specificity of the DppBCDF transporter.

In terms of biological role, part of the ABC transporter DppABCDF involved in the uptake of various di/tripeptides. Prefers dipeptides with acidic residues at the C-terminal end. Involved in the uptake of phaseolotoxin, a toxic tripeptide inhibiting the enzyme ornithine carbamoyltransferase. The sequence is that of Di/tripeptide-binding protein 3 from Pseudomonas aeruginosa (strain UCBPP-PA14).